The primary structure comprises 122 residues: Large ribosomal subunit protein uL14 (122 aa).

The protein belongs to the universal ribosomal protein uL14 family. In terms of assembly, part of the 50S ribosomal subunit. Forms a cluster with proteins L3 and L19. In the 70S ribosome, L14 and L19 interact and together make contacts with the 16S rRNA in bridges B5 and B8.

In terms of biological role, binds to 23S rRNA. Forms part of two intersubunit bridges in the 70S ribosome. This chain is Large ribosomal subunit protein uL14, found in Trichodesmium erythraeum (strain IMS101).